Reading from the N-terminus, the 99-residue chain is MARITVEDCLEVVNNRFELVMMASKRARQLANGVQPLIENADASDKPTVMALREIAARRIDNALIDEVEKAERERAEREALEWAAAEVVADEDMSKNDD.

Belongs to the RNA polymerase subunit omega family. The RNAP catalytic core consists of 2 alpha, 1 beta, 1 beta' and 1 omega subunit. When a sigma factor is associated with the core the holoenzyme is formed, which can initiate transcription.

It catalyses the reaction RNA(n) + a ribonucleoside 5'-triphosphate = RNA(n+1) + diphosphate. Promotes RNA polymerase assembly. Latches the N- and C-terminal regions of the beta' subunit thereby facilitating its interaction with the beta and alpha subunits. The chain is DNA-directed RNA polymerase subunit omega from Xanthomonas axonopodis pv. citri (strain 306).